The primary structure comprises 489 residues: 2-(3-amino-3-carboxypropyl)histidine synthase subunit 2 (489 aa).

An N-acetylmethionine modification is found at M1. S7 carries the post-translational modification Phosphoserine. [4Fe-4S] cluster is bound by residues C89, C110, and C341. A Phosphothreonine modification is found at T435. Residues S446 and S456 each carry the phosphoserine modification. T467 bears the Phosphothreonine mark. At S488 the chain carries Phosphoserine.

It belongs to the DPH1/DPH2 family. DPH2 subfamily. In terms of assembly, component of the 2-(3-amino-3-carboxypropyl)histidine synthase complex composed of DPH1, DPH2, DPH3 and a NADH-dependent reductase. Interacts with DPH1. The cofactor is [4Fe-4S] cluster. In terms of tissue distribution, strongly expressed in skeletal muscle. Moderately expressed in heart, small intestine, liver, pancreas, testis and colon. Weakly expressed in brain, placenta, kidney, spleen, thymus, prostate, ovary and lymphocytes.

Its pathway is protein modification; peptidyl-diphthamide biosynthesis. Its function is as follows. Required for the first step of diphthamide biosynthesis, a post-translational modification of histidine which occurs in elongation factor 2. DPH1 and DPH2 transfer a 3-amino-3-carboxypropyl (ACP) group from S-adenosyl-L-methionine (SAM) to a histidine residue, the reaction is assisted by a reduction system comprising DPH3 and a NADH-dependent reductase. Facilitates the reduction of the catalytic iron-sulfur cluster found in the DPH1 subunit. The protein is 2-(3-amino-3-carboxypropyl)histidine synthase subunit 2 (DPH2) of Homo sapiens (Human).